Here is a 460-residue protein sequence, read N- to C-terminus: ATP synthase subunit beta (460 aa).

Glycine 150–threonine 157 serves as a coordination point for ATP.

It belongs to the ATPase alpha/beta chains family. As to quaternary structure, F-type ATPases have 2 components, CF(1) - the catalytic core - and CF(0) - the membrane proton channel. CF(1) has five subunits: alpha(3), beta(3), gamma(1), delta(1), epsilon(1). CF(0) has three main subunits: a(1), b(2) and c(9-12). The alpha and beta chains form an alternating ring which encloses part of the gamma chain. CF(1) is attached to CF(0) by a central stalk formed by the gamma and epsilon chains, while a peripheral stalk is formed by the delta and b chains.

It localises to the cell inner membrane. The enzyme catalyses ATP + H2O + 4 H(+)(in) = ADP + phosphate + 5 H(+)(out). Its function is as follows. Produces ATP from ADP in the presence of a proton gradient across the membrane. The catalytic sites are hosted primarily by the beta subunits. The protein is ATP synthase subunit beta of Shigella dysenteriae serotype 1 (strain Sd197).